A 283-amino-acid polypeptide reads, in one-letter code: Non-selective voltage-gated ion channel VDAC3 (283 aa).

At Cys2 the chain carries N-acetylcysteine. Residue Thr4 is modified to Phosphothreonine. Residues Lys12, Lys15, and Lys20 each carry the N6-acetyllysine modification. Transmembrane regions (beta stranded) follow at residues 26–35 and 39–47; these read MVKIDLRTKS and VEFSTSGHA. Lys53 is covalently cross-linked (Glycyl lysine isopeptide (Lys-Gly) (interchain with G-Cter in ubiquitin)). Transmembrane regions (beta stranded) follow at residues 54–64, 69–76, and 80–89; these read ASGNLETKYKI, LTFTQKWN, and TLGTEISWEN. Lys90 is subject to N6-acetyllysine. The beta stranded transmembrane segment at 95 to 104 threads the bilayer; the sequence is LKLTLDTIFV. Residues Lys109 and Lys110 each participate in a glycyl lysine isopeptide (Lys-Gly) (interchain with G-Cter in ubiquitin) cross-link. The next 10 beta stranded transmembrane spans lie at 111–120, 123–130, 137–145, 150–158, 163–175, 178–185, 189–198, 202–211, 218–227, and 231–238; these read SGKLKASYKR, FSLGSNVD, TIYGWAVLA, LAGYQMSFD, KLSQ…GYKA, FQLHTHVN, EFGGSIYQKV, IETSINLAWT, RFGIAAKYKL, and TSLSAKVN. Ser241 is modified (phosphoserine). NAD(+) contacts are provided by residues 242–244 and 260–264; these read LIG and SALID. 2 consecutive transmembrane segments (beta stranded) span residues 242–251 and 254–263; these read LIGLGYTQTL and GVKLTLSALI. Residue Lys266 is modified to N6-acetyllysine; alternate. A Glycyl lysine isopeptide (Lys-Gly) (interchain with G-Cter in ubiquitin); alternate cross-link involves residue Lys266. A beta stranded membrane pass occupies residues 273 to 282; it reads HKVGLGFELE.

This sequence belongs to the eukaryotic mitochondrial porin family. In terms of assembly, interacts with ARMC12 in a TBC1D21-dependent manner. Interacts with MISFA. Ubiquitinated by PRKN during mitophagy, leading to its degradation and enhancement of mitophagy. Deubiquitinated by USP30.

It is found in the mitochondrion outer membrane. Its subcellular location is the membrane. The catalysed reaction is chloride(in) = chloride(out). It catalyses the reaction K(+)(in) = K(+)(out). Non-selective voltage-gated ion channel that mediates the transport of anions and cations through the mitochondrion outer membrane and plasma membrane. Forms a high-conducting channel with a stable open state and a voltage-induced closure with a mild preference for anions over cations. Involved in male fertility and sperm mitochondrial sheath formation. The chain is Non-selective voltage-gated ion channel VDAC3 from Bos taurus (Bovine).